We begin with the raw amino-acid sequence, 456 residues long: Protein shifted (456 aa).

The signal sequence occupies residues 1–30 (MTHQGIGCLVKWLYLVLIVHTLLCIGQLEC). Residues 34 to 112 (HHNRNNNNNN…GGGGSRHNRN (79 aa)) are disordered. The segment covering 44 to 55 (RRADSSSSEEGH) has biased composition (basic and acidic residues). Residue Asn-57 is glycosylated (N-linked (GlcNAc...) asparagine). Positions 77–87 (HQPRRGQRKKQ) are enriched in basic residues. Residues 88–107 (QGGGGGGSGGGGGNGGGGGS) show a composition bias toward gly residues. Residues 119 to 261 (LWINEQQLKM…PIRLNFKKEC (143 aa)) enclose the WIF domain. N-linked (GlcNAc...) asparagine glycosylation is found at Asn-173, Asn-217, and Asn-227. 16 cysteine pairs are disulfide-bonded: Cys-224–Cys-261, Cys-283–Cys-293, Cys-287–Cys-299, Cys-301–Cys-310, Cys-315–Cys-325, Cys-319–Cys-331, Cys-333–Cys-342, Cys-347–Cys-357, Cys-351–Cys-363, Cys-365–Cys-374, Cys-379–Cys-389, Cys-383–Cys-395, Cys-397–Cys-406, Cys-416–Cys-423, Cys-418–Cys-429, and Cys-431–Cys-440. EGF-like domains are found at residues 279–311 (TLQE…QYCE), 315–342 (CFPQ…GTQC), 343–375 (EGGI…LRCE), 376–407 (YSKC…DHCE), and 412–441 (QRSI…RHCN). The N-linked (GlcNAc...) asparagine glycan is linked to Asn-324. Asn-420 is a glycosylation site (N-linked (GlcNAc...) asparagine).

As to quaternary structure, interacts with hh. As to expression, at the blastoderm stage, it is ubiquitously expressed. As embryogenesis continues, it is expressed in the epidermis and central nervous system, this expression being segmentally modulated. Also highly expressed at the foregut and hindgut throughout embryogenesis. In third instar wing imaginal disks, it is highly expressed in the most anterior and posterior parts of the disk and weakly expressed at the antero/posterior (A/P) compartment border. In the leg disks and the antenna part of the eye-antennal imaginal disk it is also weakly expressed at the A/P compartment border. Weakly expressed in the morphogenetic furrow in the eye primordium.

It localises to the secreted. It is found in the extracellular space. Its subcellular location is the extracellular matrix. Required for normal accumulation and movement of lipid-modified hedgehog (hh) morphogen. May act by stabilizing the interaction between heparan sulfate proteoglycans (HSPGs) and hh, HSPGs being required for diffusion of hh morphogen. Not involved in wingless (wg) morphogen movement, suggesting that it may provide HSPG specificity for Hh. The polypeptide is Protein shifted (shf) (Drosophila melanogaster (Fruit fly)).